Consider the following 365-residue polypeptide: Homeobox protein knotted-1-like 7 (365 aa).

The segment covering 1-11 (MEELEGHRGEG) has biased composition (basic and acidic residues). The segment at 1–20 (MEELEGHRGEGRLPPPPPLL) is disordered. Residues 227–247 (ALKRHLLRKYSGYLGGLRKEL) form the ELK domain. A DNA-binding region (homeobox; TALE-type) is located at residues 248–311 (SKKRKKGKLP…NQRKRHWKPT (64 aa)).

It belongs to the TALE/KNOX homeobox family.

It is found in the nucleus. Probable transcription factor that may be involved in shoot formation during embryogenesis. In Oryza sativa subsp. japonica (Rice), this protein is Homeobox protein knotted-1-like 7 (OSH3).